A 514-amino-acid chain; its full sequence is ATP synthase subunit alpha (514 aa).

170–177 (GDRQIGKT) provides a ligand contact to ATP.

It belongs to the ATPase alpha/beta chains family. As to quaternary structure, F-type ATPases have 2 components, CF(1) - the catalytic core - and CF(0) - the membrane proton channel. CF(1) has five subunits: alpha(3), beta(3), gamma(1), delta(1), epsilon(1). CF(0) has three main subunits: a(1), b(2) and c(9-12). The alpha and beta chains form an alternating ring which encloses part of the gamma chain. CF(1) is attached to CF(0) by a central stalk formed by the gamma and epsilon chains, while a peripheral stalk is formed by the delta and b chains.

It is found in the cell inner membrane. The enzyme catalyses ATP + H2O + 4 H(+)(in) = ADP + phosphate + 5 H(+)(out). Produces ATP from ADP in the presence of a proton gradient across the membrane. The alpha chain is a regulatory subunit. The polypeptide is ATP synthase subunit alpha (Pseudomonas aeruginosa (strain LESB58)).